The chain runs to 203 residues: Thymidylate kinase (203 aa).

An ATP-binding site is contributed by glycine 7 to serine 14.

It belongs to the thymidylate kinase family.

It carries out the reaction dTMP + ATP = dTDP + ADP. Its function is as follows. Phosphorylation of dTMP to form dTDP in both de novo and salvage pathways of dTTP synthesis. The sequence is that of Thymidylate kinase from Finegoldia magna (strain ATCC 29328 / DSM 20472 / WAL 2508) (Peptostreptococcus magnus).